Reading from the N-terminus, the 472-residue chain is Interferon-induced protein with tetratricopeptide repeats 2 (472 aa).

Position 2 is an N-acetylserine (serine 2). TPR repeat units lie at residues 51–89 (ATMC…ADQA), 90–135 (EIRS…RIES), 136–171 (PELD…KPKN), 172–208 (PEFT…NPDN), 247–280 (TDVL…IPNN), 281–335 (AYLH…NLFR), 336–366 (VCSI…KELT), 367–405 (PVAK…NQKS), and 406–448 (REKE…KMQQ). Positions 446–472 (MQQADEDSERGLESGSLIPSASSWNGE) are disordered. The span at 462-472 (LIPSASSWNGE) shows a compositional bias: polar residues.

The protein belongs to the IFIT family. In terms of assembly, domain-swapped homodimer. Component of an interferon-dependent multiprotein complex, at least composed of IFIT1, IFIT2 and IFIT3. Interacts with IFIT1 and IFIT3. Interacts with STING1/MITA and disrupts its interaction with MAVS or TBK1. Interacts with EIF3E and EIF3C.

The protein resides in the cytoplasm. It localises to the endoplasmic reticulum. Functionally, IFN-induced antiviral protein which inhibits expression of viral messenger RNAs lacking 2'-O-methylation of the 5' cap. The ribose 2'-O-methylation would provide a molecular signature to distinguish between self and non-self mRNAs by the host during viral infection. Viruses evolved several ways to evade this restriction system such as encoding their own 2'-O-methylase for their mRNAs or by stealing host cap containing the 2'-O-methylation (cap snatching mechanism). Binds AU-rich viral RNAs, with or without 5' triphosphorylation, RNA-binding is required for antiviral activity. Can promote apoptosis. This Homo sapiens (Human) protein is Interferon-induced protein with tetratricopeptide repeats 2 (IFIT2).